Here is a 434-residue protein sequence, read N- to C-terminus: Tryptamine hydroxycinnamoyltransferase 2 (434 aa).

Residues histidine 154 and aspartate 380 each act as proton acceptor in the active site.

It belongs to the plant acyltransferase family.

Functionally, hydroxycinnamoyl transferase that catalyzes the transfer of an acyl from p-coumaryol-CoA to tryptamine, to produce coumaroyl tryptamine. Serotonin and tyramine serve as acyl acceptors in vitro. Can use caffeoyl-CoA, and to a lesser extent feruloyl-CoA, as acyl donors. In Oryza sativa subsp. japonica (Rice), this protein is Tryptamine hydroxycinnamoyltransferase 2.